The chain runs to 153 residues: Ribonuclease H (153 aa).

The RNase H type-1 domain occupies 1–141; that stretch reads MKHVHIFTDG…ADELARKGME (141 aa). Asp-9, Glu-47, Asp-69, and Asp-133 together coordinate Mg(2+). The disordered stretch occupies residues 123-153; the sequence is HAGHPENERADELARKGMEPFKKARRADAVK. The span at 125-153 shows a compositional bias: basic and acidic residues; it reads GHPENERADELARKGMEPFKKARRADAVK.

The protein belongs to the RNase H family. In terms of assembly, monomer. Mg(2+) is required as a cofactor.

Its subcellular location is the cytoplasm. It catalyses the reaction Endonucleolytic cleavage to 5'-phosphomonoester.. Its function is as follows. Endonuclease that specifically degrades the RNA of RNA-DNA hybrids. The chain is Ribonuclease H from Rhizobium meliloti (strain 1021) (Ensifer meliloti).